A 354-amino-acid chain; its full sequence is Trans-L-3-hydroxyproline dehydratase (354 aa).

The active-site Proton acceptor is the Cys-104. Residues 105 to 106 (GH), Asp-269, and 274 to 275 (GS) contribute to the substrate site.

The protein belongs to the proline racemase family. In terms of assembly, homodimer.

It catalyses the reaction trans-3-hydroxy-L-proline = 1-pyrroline-2-carboxylate + H2O. Catalyzes the dehydration of trans-3-hydroxy-L-proline to delta-1-pyrroline-2-carboxylate (Pyr2C). In Pongo abelii (Sumatran orangutan), this protein is Trans-L-3-hydroxyproline dehydratase (L3HYPDH).